A 309-amino-acid polypeptide reads, in one-letter code: Porphobilinogen deaminase (309 aa).

Cys-241 is subject to S-(dipyrrolylmethanemethyl)cysteine.

The protein belongs to the HMBS family. In terms of assembly, monomer. The cofactor is dipyrromethane.

It carries out the reaction 4 porphobilinogen + H2O = hydroxymethylbilane + 4 NH4(+). Its pathway is porphyrin-containing compound metabolism; protoporphyrin-IX biosynthesis; coproporphyrinogen-III from 5-aminolevulinate: step 2/4. Functionally, tetrapolymerization of the monopyrrole PBG into the hydroxymethylbilane pre-uroporphyrinogen in several discrete steps. This chain is Porphobilinogen deaminase, found in Bacillus thuringiensis (strain Al Hakam).